A 223-amino-acid polypeptide reads, in one-letter code: Endonuclease V (223 aa).

Residues D35 and D103 each coordinate Mg(2+).

Belongs to the endonuclease V family. Mg(2+) serves as cofactor.

Its subcellular location is the cytoplasm. It catalyses the reaction Endonucleolytic cleavage at apurinic or apyrimidinic sites to products with a 5'-phosphate.. DNA repair enzyme involved in the repair of deaminated bases. Selectively cleaves double-stranded DNA at the second phosphodiester bond 3' to a deoxyinosine leaving behind the intact lesion on the nicked DNA. This is Endonuclease V from Escherichia coli O45:K1 (strain S88 / ExPEC).